Consider the following 940-residue polypeptide: Testis-expressed protein 11 (940 aa).

Belongs to the SPO22 family. Interacts with SYCP2. Interacts with PBXIP1; may prevent interaction between PBXIP1 and ESR2. Interacts with SHOC1. Interacts with REDIC1. In terms of tissue distribution, testis-specific. Not expressed in adult ovaries.

Its subcellular location is the chromosome. In terms of biological role, regulator of crossing-over during meiosis. Involved in initiation and/or maintenance of chromosome synapsis and formation of crossovers. In Homo sapiens (Human), this protein is Testis-expressed protein 11 (TEX11).